The sequence spans 497 residues: Protein nucleotidyltransferase YdiU (497 aa).

ATP is bound by residues Gly-92, Gly-94, Arg-95, Lys-114, Asp-126, Gly-127, Arg-177, and Arg-184. The active-site Proton acceptor is Asp-261. Mg(2+) is bound by residues Asn-262 and Asp-271. Asp-271 is a binding site for ATP.

It belongs to the SELO family. Requires Mg(2+) as cofactor. Mn(2+) is required as a cofactor.

The catalysed reaction is L-seryl-[protein] + ATP = 3-O-(5'-adenylyl)-L-seryl-[protein] + diphosphate. It catalyses the reaction L-threonyl-[protein] + ATP = 3-O-(5'-adenylyl)-L-threonyl-[protein] + diphosphate. It carries out the reaction L-tyrosyl-[protein] + ATP = O-(5'-adenylyl)-L-tyrosyl-[protein] + diphosphate. The enzyme catalyses L-histidyl-[protein] + UTP = N(tele)-(5'-uridylyl)-L-histidyl-[protein] + diphosphate. The catalysed reaction is L-seryl-[protein] + UTP = O-(5'-uridylyl)-L-seryl-[protein] + diphosphate. It catalyses the reaction L-tyrosyl-[protein] + UTP = O-(5'-uridylyl)-L-tyrosyl-[protein] + diphosphate. Functionally, nucleotidyltransferase involved in the post-translational modification of proteins. It can catalyze the addition of adenosine monophosphate (AMP) or uridine monophosphate (UMP) to a protein, resulting in modifications known as AMPylation and UMPylation. The chain is Protein nucleotidyltransferase YdiU from Bordetella petrii (strain ATCC BAA-461 / DSM 12804 / CCUG 43448).